A 720-amino-acid polypeptide reads, in one-letter code: Probable GTPase-activating protein GYL1 (720 aa).

Methionine 1 carries the N-acetylmethionine modification. Basic and acidic residues predominate over residues 1 to 52; the sequence is MNSNEDIHEERIEVPRTPHQTQPEKDSDRIALRDEISVPEGDEKAYSDEKVE. The segment at 1–132 is disordered; the sequence is MNSNEDIHEE…TSPPLPPRAD (132 aa). At threonine 17 the chain carries Phosphothreonine. Serine 37 is subject to Phosphoserine. The span at 54–66 shows a compositional bias: polar residues; it reads ATTNASSNFGSNE. Serine 73 carries the post-translational modification Phosphoserine. Residues 95–108 are compositionally biased toward polar residues; that stretch reads SKTILPSDDLSQQL. Residues 111–120 are compositionally biased toward basic and acidic residues; it reads EESKVEEALK. Serine 139 is modified (phosphoserine). Disordered stretches follow at residues 144–164 and 179–210; these read SLPP…RPQL and APHG…PRRI. A compositionally biased stretch (polar residues) spans 184 to 196; the sequence is ATPSKSPTSAVGN. One can recognise a Rab-GAP TBC domain in the interval 297–477; that stretch reads GIPAAYRLVV…RIGDMVFLEG (181 aa). Residue lysine 498 forms a Glycyl lysine isopeptide (Lys-Gly) (interchain with G-Cter in SUMO) linkage. A coiled-coil region spans residues 572 to 696; the sequence is QYKSITEKNL…EIKTANKNGT (125 aa).

It belongs to the GYP5 family. As to quaternary structure, interacts with GYP5 and RVS167. Is part of SEC4-containing complexes.

It localises to the cytoplasm. It is found in the bud. The protein resides in the bud neck. In terms of biological role, probable GTPase-activating protein which stimulates the GTP hydrolysis rate by GYP5 of YPT1 and SEC4. Involved in ER to Golgi trafficking and polarized exocytosis. The polypeptide is Probable GTPase-activating protein GYL1 (GYL1) (Saccharomyces cerevisiae (strain ATCC 204508 / S288c) (Baker's yeast)).